A 164-amino-acid polypeptide reads, in one-letter code: Small ribosomal subunit protein uS5 (164 aa).

The S5 DRBM domain maps to 10 to 73 (LEERVVAINR…EAAKKNLIEV (64 aa)).

Belongs to the universal ribosomal protein uS5 family. Part of the 30S ribosomal subunit. Contacts proteins S4 and S8.

With S4 and S12 plays an important role in translational accuracy. Its function is as follows. Located at the back of the 30S subunit body where it stabilizes the conformation of the head with respect to the body. In Streptococcus thermophilus (strain CNRZ 1066), this protein is Small ribosomal subunit protein uS5.